Reading from the N-terminus, the 280-residue chain is Truncated lectin 2 (280 aa).

The signal sequence occupies residues 1–26 (MSSSNFSCILSISLTFFILLLNKVNS). Residues Glu-148 and Asp-150 each contribute to the Mn(2+) site. Ca(2+)-binding residues include Asp-150, Phe-152, Asn-154, and Asp-158. Asp-158 serves as a coordination point for Mn(2+). A glycan (N-linked (GlcNAc...) asparagine) is linked at Asn-163. His-170 is a Mn(2+) binding site. N-linked (GlcNAc...) asparagine glycosylation occurs at Asn-272.

Belongs to the leguminous lectin family.

The protein is Truncated lectin 2 (LEC2) of Medicago truncatula (Barrel medic).